A 468-amino-acid chain; its full sequence is Aldehyde dehydrogenase family 3 member B1 (468 aa).

Methionine 1 carries the N-acetylmethionine modification. NAD(+) is bound at residue 188–193; the sequence is GNAYVG. Residues glutamate 210 and cysteine 244 contribute to the active site. Residues cysteine 462 and cysteine 463 are each lipidated (S-palmitoyl cysteine). Cysteine 465 is subject to Cysteine methyl ester. Cysteine 465 carries the S-geranylgeranyl cysteine lipid modification. Residues 466–468 constitute a propeptide, removed in mature form; it reads TLL.

It belongs to the aldehyde dehydrogenase family. In terms of processing, dually lipidated in the C-terminus; prenylation occurs prior to, and is a prerequisite for palmitoylation. It is also required for activity towards long-chain substrates. As to expression, highly expressed in kidney and liver. In brain is expressed at moderate levels in cortex, striatum and hippocampus, and at lower levels in brainstem and cerebellum.

Its subcellular location is the cell membrane. The enzyme catalyses an aldehyde + NAD(+) + H2O = a carboxylate + NADH + 2 H(+). It carries out the reaction a long-chain fatty aldehyde + NAD(+) + H2O = a long-chain fatty acid + NADH + 2 H(+). The catalysed reaction is a medium-chain fatty aldehyde + NAD(+) + H2O = a medium-chain fatty acid + NADH + 2 H(+). It catalyses the reaction octanal + NAD(+) + H2O = octanoate + NADH + 2 H(+). The enzyme catalyses nonanal + NAD(+) + H2O = nonanoate + NADH + 2 H(+). It carries out the reaction hexadecanoate + NADH + 2 H(+) = hexadecanal + NAD(+) + H2O. The catalysed reaction is (2E)-octenal + NAD(+) + H2O = (2E)-octenoate + NADH + 2 H(+). It catalyses the reaction (E)-non-2-enal + NAD(+) + H2O = (E)-non-2-enoate + NADH + 2 H(+). The enzyme catalyses (E)-4-hydroxynon-2-enal + NAD(+) + H2O = (E)-4-hydroxynon-2-enoate + NADH + 2 H(+). It carries out the reaction (2E)-hexadecenal + NAD(+) + H2O = (E)-hexadec-2-enoate + NADH + 2 H(+). The catalysed reaction is benzaldehyde + NAD(+) + H2O = benzoate + NADH + 2 H(+). It catalyses the reaction an aldehyde + NADP(+) + H2O = a carboxylate + NADPH + 2 H(+). The enzyme catalyses a medium-chain fatty aldehyde + NADP(+) + H2O = a medium-chain fatty acid + NADPH + 2 H(+). It carries out the reaction hexanal + NADP(+) + H2O = hexanoate + NADPH + 2 H(+). The catalysed reaction is octanal + NADP(+) + H2O = octanoate + NADPH + 2 H(+). It catalyses the reaction nonanal + NADP(+) + H2O = nonanoate + NADPH + 2 H(+). The enzyme catalyses (2E)-octenal + NADP(+) + H2O = (2E)-octenoate + NADPH + 2 H(+). It carries out the reaction (E)-non-2-enal + NADP(+) + H2O = (E)-non-2-enoate + NADPH + 2 H(+). The catalysed reaction is (E)-4-hydroxynon-2-enal + NADP(+) + H2O = (E)-4-hydroxynon-2-enoate + NADPH + 2 H(+). It catalyses the reaction benzaldehyde + NADP(+) + H2O = benzoate + NADPH + 2 H(+). It functions in the pathway alcohol metabolism; ethanol degradation; acetate from ethanol: step 2/2. Its function is as follows. Oxidizes medium and long chain saturated and unsaturated fatty aldehydes generated in the plasma membrane into non-toxic fatty acids. May have a protective role against the cytotoxicity induced by lipid peroxidation. Short-chain fatty aldehydes are not good substrates. Can use both NADP(+) and NAD(+) as electron acceptor in vitro, however in vivo preference will depend on their tissue levels. Low activity towards acetaldehyde and 3,4-dihydroxyphenylacetaldehyde. Able to metabolize aromatic aldehydes such as benzaldehyde to their acid form. In Mus musculus (Mouse), this protein is Aldehyde dehydrogenase family 3 member B1 (Aldh3b1).